The chain runs to 413 residues: Amino acid transporter AVT3B (413 aa).

The Cytoplasmic portion of the chain corresponds to 1–27 (MGLEEQGRAREDTPLLGKGRPLSSKFK). Residues 28–48 (TFANVFIAIVGAGVLGLPYAF) traverse the membrane as a helical segment. Residues 49-54 (KRTGWL) lie on the Vacuolar side of the membrane. The chain crosses the membrane as a helical span at residues 55–75 (MGLLTLFSVAALINHCMMLLV). Topologically, residues 76 to 103 (HIRRKLGVSNIGSFGDLGFAACGNLGRF) are cytoplasmic. The chain crosses the membrane as a helical span at residues 104–124 (VVDILIILSQAGFCVGYLIFI). Topologically, residues 125 to 145 (GNTLANLSKPTKSTTLMSLRH) are vacuolar. The chain crosses the membrane as a helical span at residues 146–166 (LMGVSPKSLYIWGCFPFQLGL). Topologically, residues 167-174 (NSIKTLTH) are cytoplasmic. Residues 175–195 (LAPLSIFADVVDLGAMAVVIV) traverse the membrane as a helical segment. Residues 196–207 (EDIKITVVQRPQ) lie on the Vacuolar side of the membrane. The helical transmembrane segment at 208–228 (VVAFGGMSVFFYGMGVAVYAF) threads the bilayer. Over 229–249 (EGVGMVLPLESETKDKDKFGK) the chain is Cytoplasmic. Residues 250–270 (VLALSMLFIAVMYGSFGVLGY) traverse the membrane as a helical segment. The Vacuolar segment spans residues 271 to 288 (MAFGDDTMDIITANLGAG). Residues 289–309 (VVSSLVQLGLCINLFFTFPLM) form a helical membrane-spanning segment. Topologically, residues 310–331 (MNPVFEIVERRFWSGMYCVWLR) are cytoplasmic. A helical transmembrane segment spans residues 332 to 352 (WLLVLAVTLVALLVPNFADFL). The Vacuolar portion of the chain corresponds to 353–355 (SLV). A helical membrane pass occupies residues 356–376 (GSSVCCALGFVLPSLFHLMVF). Over 377-390 (KDEMEWKQRALDVG) the chain is Cytoplasmic. The helical transmembrane segment at 391 to 411 (ILLLGVILGVSGTWSSLTEIF) threads the bilayer. Topologically, residues 412–413 (QE) are vacuolar.

Belongs to the amino acid/polyamine transporter 2 family. Amino acid/auxin permease (AAAP) (TC 2.A.18.8) subfamily. In terms of tissue distribution, ubiquitous.

Its subcellular location is the vacuole membrane. Its function is as follows. Translocates preferentially neutral amino acids from the vacuole to the cytoplasm. In Arabidopsis thaliana (Mouse-ear cress), this protein is Amino acid transporter AVT3B.